Consider the following 176-residue polypeptide: Dual-action ribosomal maturation protein DarP (176 aa).

Belongs to the DarP family.

It localises to the cytoplasm. In terms of biological role, member of a network of 50S ribosomal subunit biogenesis factors which assembles along the 30S-50S interface, preventing incorrect 23S rRNA structures from forming. Promotes peptidyl transferase center (PTC) maturation. The chain is Dual-action ribosomal maturation protein DarP from Aliivibrio fischeri (strain MJ11) (Vibrio fischeri).